The sequence spans 40 residues: Photosystem II reaction center protein J (40 aa).

The helical transmembrane segment at 8–28 threads the bilayer; sequence IPLWLIGTVTGILVIGLLGIF.

The protein belongs to the PsbJ family. In terms of assembly, PSII is composed of 1 copy each of membrane proteins PsbA, PsbB, PsbC, PsbD, PsbE, PsbF, PsbH, PsbI, PsbJ, PsbK, PsbL, PsbM, PsbT, PsbX, PsbY, PsbZ, Psb30/Ycf12, at least 3 peripheral proteins of the oxygen-evolving complex and a large number of cofactors. It forms dimeric complexes.

The protein resides in the plastid. The protein localises to the chloroplast thylakoid membrane. In terms of biological role, one of the components of the core complex of photosystem II (PSII). PSII is a light-driven water:plastoquinone oxidoreductase that uses light energy to abstract electrons from H(2)O, generating O(2) and a proton gradient subsequently used for ATP formation. It consists of a core antenna complex that captures photons, and an electron transfer chain that converts photonic excitation into a charge separation. In Angiopteris evecta (Mule's foot fern), this protein is Photosystem II reaction center protein J.